A 102-amino-acid polypeptide reads, in one-letter code: Small ribosomal subunit protein uS10 (102 aa).

It belongs to the universal ribosomal protein uS10 family. As to quaternary structure, part of the 30S ribosomal subunit.

Its function is as follows. Involved in the binding of tRNA to the ribosomes. This Caulobacter sp. (strain K31) protein is Small ribosomal subunit protein uS10.